The following is a 248-amino-acid chain: PF03932 family protein CutC (248 aa).

This sequence belongs to the CutC family.

It is found in the cytoplasm. The chain is PF03932 family protein CutC from Photorhabdus laumondii subsp. laumondii (strain DSM 15139 / CIP 105565 / TT01) (Photorhabdus luminescens subsp. laumondii).